The sequence spans 582 residues: Threonine--tRNA ligase (582 aa).

A catalytic region spans residues 185–478; sequence DHRKLGKELE…LTEQYGGAFP (294 aa). Zn(2+) contacts are provided by cysteine 278, histidine 329, and histidine 455.

Belongs to the class-II aminoacyl-tRNA synthetase family. In terms of assembly, homodimer. It depends on Zn(2+) as a cofactor.

It localises to the cytoplasm. It carries out the reaction tRNA(Thr) + L-threonine + ATP = L-threonyl-tRNA(Thr) + AMP + diphosphate + H(+). Its function is as follows. Catalyzes the attachment of threonine to tRNA(Thr) in a two-step reaction: L-threonine is first activated by ATP to form Thr-AMP and then transferred to the acceptor end of tRNA(Thr). Also edits incorrectly charged L-seryl-tRNA(Thr). The sequence is that of Threonine--tRNA ligase from Dehalococcoides mccartyi (strain ATCC BAA-2100 / JCM 16839 / KCTC 5957 / BAV1).